The sequence spans 144 residues: uncharacterized protein (144 aa).

Residues Asn-14 and Asn-15 are each glycosylated (N-linked (GlcNAc...) asparagine). Residues 90 to 110 form a helical membrane-spanning segment; it reads FSWFIFGLFIACLLLCITLVL. The segment at 120–144 is disordered; sequence NKATEVVPSSNIDDEEKQLSLSDMI.

The protein localises to the membrane. This is an uncharacterized protein from Saccharomyces cerevisiae (strain ATCC 204508 / S288c) (Baker's yeast).